The sequence spans 357 residues: RNA-binding protein 4B (357 aa).

2 consecutive RRM domains span residues V2–N72 and T78–S148. A CCHC-type zinc finger spans residues S160–V177. The interval A196–F357 is interaction with TNPO3.

In terms of assembly, interacts with TNPO3, which may mediate nuclear import of the protein. In terms of tissue distribution, expressed in the suprachiasmatic nucleus (SCN) (at protein level). Expressed in the suprachiasmatic nucleus (SCN).

The protein localises to the nucleus. The protein resides in the nucleolus. Functionally, required for the translational activation of PER1 mRNA in response to circadian clock. Binds directly to the 3'-UTR of the PER1 mRNA. This Mus musculus (Mouse) protein is RNA-binding protein 4B (Rbm4b).